The sequence spans 671 residues: DNA ligase (671 aa).

NAD(+) is bound by residues 32–36 (DAEYD), 81–82 (SL), and Glu113. Lys115 (N6-AMP-lysine intermediate) is an active-site residue. Positions 136, 173, 290, and 314 each coordinate NAD(+). Zn(2+) is bound by residues Cys408, Cys411, Cys426, and Cys432. Residues 593–671 (EIDSPFAGKT…ETEMLRLLGS (79 aa)) enclose the BRCT domain.

Belongs to the NAD-dependent DNA ligase family. LigA subfamily. Mg(2+) is required as a cofactor. Mn(2+) serves as cofactor.

It catalyses the reaction NAD(+) + (deoxyribonucleotide)n-3'-hydroxyl + 5'-phospho-(deoxyribonucleotide)m = (deoxyribonucleotide)n+m + AMP + beta-nicotinamide D-nucleotide.. In terms of biological role, DNA ligase that catalyzes the formation of phosphodiester linkages between 5'-phosphoryl and 3'-hydroxyl groups in double-stranded DNA using NAD as a coenzyme and as the energy source for the reaction. It is essential for DNA replication and repair of damaged DNA. The chain is DNA ligase from Escherichia coli O127:H6 (strain E2348/69 / EPEC).